A 226-amino-acid polypeptide reads, in one-letter code: Cytidylate kinase (226 aa).

12–20 is a binding site for ATP; that stretch reads GPSGAGKGT.

Belongs to the cytidylate kinase family. Type 1 subfamily.

It is found in the cytoplasm. The enzyme catalyses CMP + ATP = CDP + ADP. It catalyses the reaction dCMP + ATP = dCDP + ADP. The polypeptide is Cytidylate kinase (Vibrio vulnificus (strain CMCP6)).